Reading from the N-terminus, the 261-residue chain is 5'-nucleotidase SurE (261 aa).

Residues Asp-8, Asp-9, Ser-40, and Asn-94 each contribute to the a divalent metal cation site.

This sequence belongs to the SurE nucleotidase family. The cofactor is a divalent metal cation.

The protein localises to the cytoplasm. It catalyses the reaction a ribonucleoside 5'-phosphate + H2O = a ribonucleoside + phosphate. In terms of biological role, nucleotidase that shows phosphatase activity on nucleoside 5'-monophosphates. The sequence is that of 5'-nucleotidase SurE from Anaplasma marginale (strain St. Maries).